Reading from the N-terminus, the 440-residue chain is Golgi reassembly-stacking protein 1 (440 aa).

G2 carries N-myristoyl glycine lipidation. 2 PDZ GRASP-type domains span residues 15–105 (EGFH…FCSF) and 111–199 (QVWH…YGYL). Residues 15–215 (EGFHLHGVQE…PPSYHKKPPG (201 aa)) are GRASP. Residues H18, H20, and C103 each contribute to the Zn(2+) site. Residues 190 to 202 (LGCGIGYGYLHRI) are essential for interaction with GOLGA2/GM130. Disordered regions lie at residues 205–248 (QPPS…ETGS), 261–301 (PGSS…PVQR), and 327–440 (LPSS…STTE). Over residues 214–239 (PGTPPPSALPLGAPPPDALPPGPTPE) the composition is skewed to pro residues. T216 is modified (phosphothreonine). Low complexity predominate over residues 327–336 (LPSSTELTTT). A compositionally biased stretch (polar residues) spans 337-351 (AVSTSGPEDICSSSS). Phosphoserine occurs at positions 362, 364, and 373.

This sequence belongs to the GORASP family. Homodimer. Forms higher-order oligomers under interphase but not mitotic conditions. Dimers of the protein on one membrane might be able to interact with dimers on another and so stack cisternae. Interacts with the C-terminus of GOLGA2/GM130 under both mitotic and non-mitotic conditions. The interaction is critical for the correct targeting of both proteins to the cis-Golgi. Interacts with TMED2 and TMED3. Phosphorylated by CDC2/B1 and PLK kinases during mitosis. Phosphorylation cycle correlates with the cisternal stacking cycle. Phosphorylation of the homodimer prevents the association of dimers into higher-order oligomers, leading to cisternal unstacking. In terms of processing, target for caspase-3 cleavage during apoptosis. The cleavage contributes to Golgi fragmentation and occurs very early in the execution phase of apoptosis. Post-translationally, myristoylated.

The protein localises to the golgi apparatus. The protein resides in the cis-Golgi network membrane. It localises to the endoplasmic reticulum-Golgi intermediate compartment membrane. Its function is as follows. Key structural protein of the Golgi apparatus. The membrane cisternae of the Golgi apparatus adhere to each other to form stacks, which are aligned side by side to form the Golgi ribbon. Acting in concert with GORASP2/GRASP55, is required for the formation and maintenance of the Golgi ribbon, and may be dispensable for the formation of stacks. However, other studies suggest that GORASP1 plays an important role in assembly and membrane stacking of the cisternae, and in the reassembly of Golgi stacks after breakdown during mitosis. Caspase-mediated cleavage of GORASP1 is required for fragmentation of the Golgi during apoptosis. Also mediates, via its interaction with GOLGA2/GM130, the docking of transport vesicles with the Golgi membranes. Mediates ER stress-induced unconventional (ER/Golgi-independent) trafficking of core-glycosylated CFTR to cell membrane. The polypeptide is Golgi reassembly-stacking protein 1 (GORASP1) (Homo sapiens (Human)).